The following is a 271-amino-acid chain: D-methionine-binding lipoprotein MetQ (271 aa).

The first 22 residues, 1-22, serve as a signal peptide directing secretion; the sequence is MAFKFKTFAAVGALIGSLALAG. Cysteine 23 carries the N-palmitoyl cysteine lipid modification. Residue cysteine 23 is the site of S-diacylglycerol cysteine attachment.

This sequence belongs to the NlpA lipoprotein family.

The protein resides in the cell membrane. Its function is as follows. This protein is a component of a D-methionine permease, a binding protein-dependent, ATP-driven transport system. This chain is D-methionine-binding lipoprotein MetQ (metQ), found in Salmonella typhi.